We begin with the raw amino-acid sequence, 371 residues long: N-acetyldiaminopimelate deacetylase (371 aa).

Aspartate 68 is an active-site residue. The active-site Proton acceptor is glutamate 127.

It belongs to the peptidase M20A family. N-acetyldiaminopimelate deacetylase subfamily.

The catalysed reaction is N-acetyl-(2S,6S)-2,6-diaminopimelate + H2O = (2S,6S)-2,6-diaminopimelate + acetate. It participates in amino-acid biosynthesis; L-lysine biosynthesis via DAP pathway; LL-2,6-diaminopimelate from (S)-tetrahydrodipicolinate (acetylase route): step 3/3. Functionally, catalyzes the conversion of N-acetyl-diaminopimelate to diaminopimelate and acetate. The chain is N-acetyldiaminopimelate deacetylase from Oceanobacillus iheyensis (strain DSM 14371 / CIP 107618 / JCM 11309 / KCTC 3954 / HTE831).